The following is a 39-amino-acid chain: LIM/homeobox protein xLIM-2B (39 aa).

The segment at residues 1 to 39 (KAKQLETLKAAFAATPKPTRHIREQLAQETGLNMRVIQV) is a DNA-binding region (homeobox).

Its subcellular location is the nucleus. The protein is LIM/homeobox protein xLIM-2B (lim2b) of Xenopus laevis (African clawed frog).